The sequence spans 414 residues: BICD family-like cargo adapter 2 (414 aa).

A coiled-coil region spans residues 34-341 (GQALLEKNEE…DALNQQLLNT (308 aa)). The segment covering 372–384 (QEKEKENNKERTG) has biased composition (basic and acidic residues). The segment at 372–399 (QEKEKENNKERTGFQRGTRTTKSLRLRG) is disordered.

In Danio rerio (Zebrafish), this protein is BICD family-like cargo adapter 2 (bicdl2).